Consider the following 153-residue polypeptide: 6,7-dimethyl-8-ribityllumazine synthase (153 aa).

5-amino-6-(D-ribitylamino)uracil-binding positions include phenylalanine 22, 56–58, and 80–82; these read AFE and TVI. 85-86 lines the (2S)-2-hydroxy-3-oxobutyl phosphate pocket; that stretch reads ST. Residue histidine 88 is the Proton donor of the active site. A 5-amino-6-(D-ribitylamino)uracil-binding site is contributed by phenylalanine 113. Arginine 127 is a (2S)-2-hydroxy-3-oxobutyl phosphate binding site.

Belongs to the DMRL synthase family. In terms of assembly, forms an icosahedral capsid composed of 60 subunits, arranged as a dodecamer of pentamers.

The enzyme catalyses (2S)-2-hydroxy-3-oxobutyl phosphate + 5-amino-6-(D-ribitylamino)uracil = 6,7-dimethyl-8-(1-D-ribityl)lumazine + phosphate + 2 H2O + H(+). The protein operates within cofactor biosynthesis; riboflavin biosynthesis; riboflavin from 2-hydroxy-3-oxobutyl phosphate and 5-amino-6-(D-ribitylamino)uracil: step 1/2. In terms of biological role, catalyzes the formation of 6,7-dimethyl-8-ribityllumazine by condensation of 5-amino-6-(D-ribitylamino)uracil with 3,4-dihydroxy-2-butanone 4-phosphate. This is the penultimate step in the biosynthesis of riboflavin. The polypeptide is 6,7-dimethyl-8-ribityllumazine synthase (Actinobacillus pleuropneumoniae (Haemophilus pleuropneumoniae)).